A 177-amino-acid chain; its full sequence is R-phycoerythrin beta chain (177 aa).

2 residues coordinate phycourobilin: Cys-50 and Cys-61. Asn-72 carries the N4-methylasparagine modification. Residues Cys-82 and Cys-158 each coordinate (2R,3E)-phycoerythrobilin.

It belongs to the phycobiliprotein family. In terms of assembly, heterodimer of an alpha and a beta chain. In terms of processing, contains two covalently linked phycoerythrobilin chromophores and one covalently linked phycourobilin chromophore.

It localises to the plastid. It is found in the chloroplast thylakoid membrane. Functionally, light-harvesting photosynthetic bile pigment-protein from the phycobiliprotein complex. This Lophosiphonia boldii (Red alga) protein is R-phycoerythrin beta chain (cpeB).